A 266-amino-acid chain; its full sequence is Type III pantothenate kinase (266 aa).

Position 11-18 (11-18 (DIGNTSTV)) interacts with ATP. 111–114 (GADR) contacts substrate. The active-site Proton acceptor is the aspartate 113. Residue aspartate 135 coordinates K(+). Threonine 138 serves as a coordination point for ATP. Residue threonine 190 coordinates substrate.

It belongs to the type III pantothenate kinase family. Homodimer. NH4(+) serves as cofactor. It depends on K(+) as a cofactor.

The protein localises to the cytoplasm. The enzyme catalyses (R)-pantothenate + ATP = (R)-4'-phosphopantothenate + ADP + H(+). Its pathway is cofactor biosynthesis; coenzyme A biosynthesis; CoA from (R)-pantothenate: step 1/5. In terms of biological role, catalyzes the phosphorylation of pantothenate (Pan), the first step in CoA biosynthesis. This chain is Type III pantothenate kinase, found in Deinococcus geothermalis (strain DSM 11300 / CIP 105573 / AG-3a).